The following is a 327-amino-acid chain: Probable cell division protein WhiA (327 aa).

The segment at residues 275–308 (SLEELGRLADPPMTKDAVAGRIRRLLSMADRKAK) is a DNA-binding region (H-T-H motif).

It belongs to the WhiA family.

Its function is as follows. Involved in cell division and chromosome segregation. In Mycobacterium leprae (strain Br4923), this protein is Probable cell division protein WhiA.